A 1468-amino-acid chain; its full sequence is DNA polymerase alpha catalytic subunit A (1468 aa).

A compositionally biased stretch (basic and acidic residues) spans 1-12 (MSSKSEKLEKLR). 3 disordered regions span residues 1 to 34 (MSSKSEKLEKLRKLQAARNGTSIDDYEGDESDGD), 71 to 135 (GVEE…KKSI), and 166 to 205 (NLNSSPTSEFKSSIKRVNGNDESSHDAGISKKVKIDPDSS). Serine 2 carries the post-translational modification N-acetylserine. Residue serine 31 is modified to Phosphoserine. The span at 71–80 (GVEEDWREVD) shows a compositional bias: basic and acidic residues. Phosphoserine is present on residues serine 82, serine 83, serine 84, serine 169, and serine 170. Residues 166-176 (NLNSSPTSEFK) are compositionally biased toward polar residues. Threonine 172 carries the phosphothreonine modification. A compositionally biased stretch (basic and acidic residues) spans 183 to 205 (NGNDESSHDAGISKKVKIDPDSS). A phosphoserine mark is found at serine 240 and serine 274. Residues 256 to 275 (LANPPSAQSLADEEDDEDSD) are disordered. Residues 266 to 275 (ADEEDDEDSD) show a composition bias toward acidic residues. Residues threonine 309 and threonine 313 each carry the phosphothreonine modification. A disordered region spans residues 813–837 (PDKEGNRSRAQKQRQNEENADAPVN). A DNA-binding region spans residues 1246 to 1381 (KKYFRREGGN…CTGVMRYKYS (136 aa)). Positions 1287, 1290, 1314, 1317, 1348, 1353, 1367, and 1372 each coordinate Zn(2+). The segment at 1287–1317 (CPSCDKRFPFGGIVSSNYYRVSYNGLQCKHC) adopts a CysA-type zinc-finger fold. Positions 1348 to 1372 (CDDSTCGIVTRQVSVFGKRCLNDGC) match the CysB motif motif.

The protein belongs to the DNA polymerase type-B family. DNA polymerase alpha:primase is a four subunit enzyme complex, which is assembled throughout the cell cycle, and consists of the two DNA polymerase subunits A POL1 and B POL12, and the DNA primase large PRI2 and small PRI1 subunits. Subunit B POL12 binds to subunit A POL1. POL1 interacts with CDC13, POB3, SPT16 and MCM10.

The protein localises to the nucleus. It carries out the reaction DNA(n) + a 2'-deoxyribonucleoside 5'-triphosphate = DNA(n+1) + diphosphate. Its function is as follows. Catalytic component of DNA polymerase alpha, which in complex with DNA primase (DNA polymerase alpha:primase) constitutes a replicative polymerase. POL1 has a role in promoting telomere replication during interaction with CDC13. In Saccharomyces cerevisiae (strain ATCC 204508 / S288c) (Baker's yeast), this protein is DNA polymerase alpha catalytic subunit A (POL1).